A 147-amino-acid chain; its full sequence is Peptide deformylase 1 (147 aa).

C90 and H132 together coordinate Fe cation. Residue E133 is part of the active site. Residue H136 coordinates Fe cation.

Belongs to the polypeptide deformylase family. Requires Fe(2+) as cofactor.

The catalysed reaction is N-terminal N-formyl-L-methionyl-[peptide] + H2O = N-terminal L-methionyl-[peptide] + formate. Its function is as follows. Removes the formyl group from the N-terminal Met of newly synthesized proteins. Requires at least a dipeptide for an efficient rate of reaction. N-terminal L-methionine is a prerequisite for activity but the enzyme has broad specificity at other positions. The polypeptide is Peptide deformylase 1 (Clostridium perfringens (strain 13 / Type A)).